Reading from the N-terminus, the 577-residue chain is Jasmonoyl--L-amino acid synthetase JAR4 (577 aa).

Ser-99 is a binding site for ATP. Residue Ser-102 participates in jasmonate binding. ATP contacts are provided by residues Met-119, Thr-122, Gly-163, Asn-168, and Gly-331 to Trp-336. Residue Thr-166–Tyr-170 coordinates an L-alpha-amino acid. Ala-328–Gly-331 is a jasmonate binding site. Lys-531 to His-535 provides a ligand contact to an L-alpha-amino acid.

Belongs to the IAA-amido conjugating enzyme family.

It carries out the reaction a jasmonate + an L-alpha-amino acid + ATP = a jasmonyl-L-amino acid + AMP + diphosphate + H(+). Functionally, catalyzes the synthesis of jasmonate-amino acid conjugates by adenylation. Catalyzes the conjugation of jasmonate (JA) to Ile, Leu and Val. Catalyzes the conjugation of jasmonate (JA) to Ile to mediate defense signaling and resistance to the herbivore Manduca sexta caterpillars. In Nicotiana attenuata (Coyote tobacco), this protein is Jasmonoyl--L-amino acid synthetase JAR4.